The primary structure comprises 39 residues: Cecropin (39 aa).

It is found in the secreted. Antibacterial peptide active against Gram-negative bacterium E.coli. Has no activity against Gram-positive bacterium M.luteus. Weakly active against M.luteus. This chain is Cecropin, found in Calliphora vicina (Blue blowfly).